Consider the following 72-residue polypeptide: uncharacterized protein (72 aa).

Residues 15–62 (NNNYNNNNNNNNNNNNNNNNNNNNNNNNNNININNNNNNNNNNNNNNN) form a disordered region.

This is an uncharacterized protein from Dictyostelium discoideum (Social amoeba).